Here is a 319-residue protein sequence, read N- to C-terminus: tRNA pseudouridine synthase B (319 aa).

Asp-49 acts as the Nucleophile in catalysis.

This sequence belongs to the pseudouridine synthase TruB family. Type 1 subfamily.

The catalysed reaction is uridine(55) in tRNA = pseudouridine(55) in tRNA. Its function is as follows. Responsible for synthesis of pseudouridine from uracil-55 in the psi GC loop of transfer RNAs. The protein is tRNA pseudouridine synthase B of Bartonella henselae (strain ATCC 49882 / DSM 28221 / CCUG 30454 / Houston 1) (Rochalimaea henselae).